Reading from the N-terminus, the 406-residue chain is Acetate kinase (406 aa).

Position 8 (Asn-8) interacts with Mg(2+). Lys-15 contacts ATP. Arg-92 serves as a coordination point for substrate. Asp-149 functions as the Proton donor/acceptor in the catalytic mechanism. Residues 209 to 213, 283 to 285, and 331 to 335 contribute to the ATP site; these read HLGNG, DFR, and GVGEN. Glu-385 is a binding site for Mg(2+).

Belongs to the acetokinase family. Homodimer. It depends on Mg(2+) as a cofactor. The cofactor is Mn(2+).

It is found in the cytoplasm. The catalysed reaction is acetate + ATP = acetyl phosphate + ADP. The protein operates within metabolic intermediate biosynthesis; acetyl-CoA biosynthesis; acetyl-CoA from acetate: step 1/2. In terms of biological role, catalyzes the formation of acetyl phosphate from acetate and ATP. Can also catalyze the reverse reaction. This chain is Acetate kinase, found in Corynebacterium aurimucosum (strain ATCC 700975 / DSM 44827 / CIP 107346 / CN-1) (Corynebacterium nigricans).